The following is a 476-amino-acid chain: Ribulose bisphosphate carboxylase large chain (476 aa).

Residues asparagine 116 and threonine 166 each coordinate substrate. Lysine 168 serves as the catalytic Proton acceptor. Substrate is bound at residue lysine 170. Positions 194, 196, and 197 each coordinate Mg(2+). Lysine 194 bears the N6-carboxylysine mark. The Proton acceptor role is filled by histidine 286. Residues arginine 287, histidine 319, and serine 371 each contribute to the substrate site.

The protein belongs to the RuBisCO large chain family. Type I subfamily. In terms of assembly, heterohexadecamer of 8 large chains and 8 small chains. Mg(2+) serves as cofactor.

The enzyme catalyses 2 (2R)-3-phosphoglycerate + 2 H(+) = D-ribulose 1,5-bisphosphate + CO2 + H2O. It carries out the reaction D-ribulose 1,5-bisphosphate + O2 = 2-phosphoglycolate + (2R)-3-phosphoglycerate + 2 H(+). Its function is as follows. RuBisCO catalyzes two reactions: the carboxylation of D-ribulose 1,5-bisphosphate, the primary event in carbon dioxide fixation, as well as the oxidative fragmentation of the pentose substrate. Both reactions occur simultaneously and in competition at the same active site. This Pseudonocardia dioxanivorans (strain ATCC 55486 / DSM 44775 / JCM 13855 / CB1190) protein is Ribulose bisphosphate carboxylase large chain.